Consider the following 319-residue polypeptide: Acetyl-coenzyme A carboxylase carboxyl transferase subunit alpha (319 aa).

A CoA carboxyltransferase C-terminal domain is found at 35 to 296 (NIDEEVHRLR…KAQLLADLAD (262 aa)).

This sequence belongs to the AccA family. Acetyl-CoA carboxylase is a heterohexamer composed of biotin carboxyl carrier protein (AccB), biotin carboxylase (AccC) and two subunits each of ACCase subunit alpha (AccA) and ACCase subunit beta (AccD).

The protein resides in the cytoplasm. It carries out the reaction N(6)-carboxybiotinyl-L-lysyl-[protein] + acetyl-CoA = N(6)-biotinyl-L-lysyl-[protein] + malonyl-CoA. Its pathway is lipid metabolism; malonyl-CoA biosynthesis; malonyl-CoA from acetyl-CoA: step 1/1. Its function is as follows. Component of the acetyl coenzyme A carboxylase (ACC) complex. First, biotin carboxylase catalyzes the carboxylation of biotin on its carrier protein (BCCP) and then the CO(2) group is transferred by the carboxyltransferase to acetyl-CoA to form malonyl-CoA. This is Acetyl-coenzyme A carboxylase carboxyl transferase subunit alpha from Shigella boydii serotype 4 (strain Sb227).